Here is a 589-residue protein sequence, read N- to C-terminus: Isocitrate dehydrogenase kinase/phosphatase (589 aa).

ATP contacts are provided by residues 317–323 and lysine 338; that span reads AAGIKGM. Aspartate 373 is an active-site residue.

This sequence belongs to the AceK family.

Its subcellular location is the cytoplasm. It catalyses the reaction L-seryl-[isocitrate dehydrogenase] + ATP = O-phospho-L-seryl-[isocitrate dehydrogenase] + ADP + H(+). Functionally, bifunctional enzyme which can phosphorylate or dephosphorylate isocitrate dehydrogenase (IDH) on a specific serine residue. This is a regulatory mechanism which enables bacteria to bypass the Krebs cycle via the glyoxylate shunt in response to the source of carbon. When bacteria are grown on glucose, IDH is fully active and unphosphorylated, but when grown on acetate or ethanol, the activity of IDH declines drastically concomitant with its phosphorylation. The polypeptide is Isocitrate dehydrogenase kinase/phosphatase (Colwellia psychrerythraea (strain 34H / ATCC BAA-681) (Vibrio psychroerythus)).